A 305-amino-acid polypeptide reads, in one-letter code: Probable cell division protein WhiA (305 aa).

Residues 269–302 (TIKELGELLDPPLGKSGVNHRLRKLVERSNDLKK) constitute a DNA-binding region (H-T-H motif).

It belongs to the WhiA family.

Its function is as follows. Involved in cell division and chromosome segregation. This is Probable cell division protein WhiA from Lactococcus lactis subsp. cremoris (strain MG1363).